A 569-amino-acid polypeptide reads, in one-letter code: Cytosolic purine 5'-nucleotidase (569 aa).

Catalysis depends on Asp-52, which acts as the Nucleophile. 2 residues coordinate IMP: Asp-52 and Asp-54. Mg(2+) contacts are provided by Asp-52 and Asp-54. The active-site Proton donor is Asp-54. Positions 144 and 154 each coordinate ATP. Residues Arg-202, Asp-206, Lys-215, Thr-249, Asn-250, Ser-251, and Lys-292 each coordinate IMP. Asp-351 is a Mg(2+) binding site. ATP-binding residues include Gln-453 and Arg-456. Residues 527 to 569 form a disordered region; the sequence is SISEIKPPNLFPQAPQEITHCHDEDDDEEEEEEEVEEEEEEEE. The segment at 548-569 is required for tetramer assembly; that stretch reads HDEDDDEEEEEEEVEEEEEEEE. Residues 550-569 show a composition bias toward acidic residues; it reads EDDDEEEEEEEVEEEEEEEE.

Belongs to the 5'(3')-deoxyribonucleotidase family. In terms of assembly, homotetramer. Mg(2+) is required as a cofactor.

It localises to the cytoplasm. The protein localises to the cytosol. It carries out the reaction a ribonucleoside 5'-phosphate + H2O = a ribonucleoside + phosphate. The catalysed reaction is a 2'-deoxyribonucleoside + a ribonucleoside 5'-phosphate = a ribonucleoside + a 2'-deoxyribonucleoside 5'-phosphate. The enzyme catalyses IMP + H2O = inosine + phosphate. It catalyses the reaction GMP + H2O = guanosine + phosphate. It carries out the reaction dGMP + H2O = 2'-deoxyguanosine + phosphate. The catalysed reaction is dIMP + H2O = 2'-deoxyinosine + phosphate. The enzyme catalyses XMP + H2O = xanthosine + phosphate. It catalyses the reaction inosine + GMP = guanosine + IMP. It carries out the reaction dGMP + inosine = 2'-deoxyguanosine + IMP. The catalysed reaction is dIMP + inosine = 2'-deoxyinosine + IMP. The enzyme catalyses inosine + UMP = uridine + IMP. It catalyses the reaction inosine + CMP = cytidine + IMP. It carries out the reaction inosine + AMP = IMP + adenosine. Its activity is regulated as follows. Allosterically activated by various compounds including ATP, 2,3-BPG/2,3-Bisphosphoglyceric acid and Ap4A/P1,P4-bis(5'-adenosyl) tetraphosphate. Binding of an allosteric activator is a prerequisiste to magnesium and substrate binding. Inhibited by inorganic phosphate. Inhibited by inosine, guanosine, p-chloromercuribenzoate and NaF. Broad specificity cytosolic 5'-nucleotidase that catalyzes the dephosphorylation of 6-hydroxypurine nucleoside 5'-monophosphates. In addition, possesses a phosphotransferase activity by which it can transfer a phosphate from a donor nucleoside monophosphate to an acceptor nucleoside, preferably inosine, deoxyinosine and guanosine. Has the highest activities for IMP and GMP followed by dIMP, dGMP and XMP. Could also catalyze the transfer of phosphates from pyrimidine monophosphates but with lower efficiency. Through these activities regulates the purine nucleoside/nucleotide pools within the cell. The polypeptide is Cytosolic purine 5'-nucleotidase (NT5C2) (Gallus gallus (Chicken)).